The following is a 689-amino-acid chain: DNA topoisomerase 1 (689 aa).

Residues 3–113 (DNLVIVESPA…KENRVVFNEI (111 aa)) form the Toprim domain. Glutamate 9 and aspartate 82 together coordinate Mg(2+). A Topo IA-type catalytic domain is found at 129 to 557 (EMDLVDAQQA…FYNSFKQDVE (429 aa)). Positions 163–168 (SAGRVQ) are interaction with DNA. Tyrosine 298 (O-(5'-phospho-DNA)-tyrosine intermediate) is an active-site residue. 3 consecutive C4-type zinc fingers follow at residues 577-603 (CEVC…FPDC), 617-645 (CPKC…YPEC), and 658-681 (CPKC…CSNC).

Belongs to the type IA topoisomerase family. In terms of assembly, monomer. The cofactor is Mg(2+).

The enzyme catalyses ATP-independent breakage of single-stranded DNA, followed by passage and rejoining.. Its function is as follows. Releases the supercoiling and torsional tension of DNA, which is introduced during the DNA replication and transcription, by transiently cleaving and rejoining one strand of the DNA duplex. Introduces a single-strand break via transesterification at a target site in duplex DNA. The scissile phosphodiester is attacked by the catalytic tyrosine of the enzyme, resulting in the formation of a DNA-(5'-phosphotyrosyl)-enzyme intermediate and the expulsion of a 3'-OH DNA strand. The free DNA strand then undergoes passage around the unbroken strand, thus removing DNA supercoils. Finally, in the religation step, the DNA 3'-OH attacks the covalent intermediate to expel the active-site tyrosine and restore the DNA phosphodiester backbone. This chain is DNA topoisomerase 1, found in Staphylococcus epidermidis (strain ATCC 35984 / DSM 28319 / BCRC 17069 / CCUG 31568 / BM 3577 / RP62A).